We begin with the raw amino-acid sequence, 432 residues long: Ribosomal protein uS12 methylthiotransferase RimO (432 aa).

One can recognise an MTTase N-terminal domain in the interval 4-122 (NKVDIITLGC…LISDLGKSYH (119 aa)). 6 residues coordinate [4Fe-4S] cluster: C13, C51, C85, C146, C150, and C153. The Radical SAM core domain maps to 132–363 (TTPRHYAYVK…MRVQEGISAD (232 aa)). The region spanning 366 to 432 (ASKVGQTFRV…AFDLYGKVLN (67 aa)) is the TRAM domain.

Belongs to the methylthiotransferase family. RimO subfamily. [4Fe-4S] cluster serves as cofactor.

The protein resides in the cytoplasm. It catalyses the reaction L-aspartate(89)-[ribosomal protein uS12]-hydrogen + (sulfur carrier)-SH + AH2 + 2 S-adenosyl-L-methionine = 3-methylsulfanyl-L-aspartate(89)-[ribosomal protein uS12]-hydrogen + (sulfur carrier)-H + 5'-deoxyadenosine + L-methionine + A + S-adenosyl-L-homocysteine + 2 H(+). Functionally, catalyzes the methylthiolation of an aspartic acid residue of ribosomal protein uS12. The sequence is that of Ribosomal protein uS12 methylthiotransferase RimO from Parabacteroides distasonis (strain ATCC 8503 / DSM 20701 / CIP 104284 / JCM 5825 / NCTC 11152).